A 190-amino-acid chain; its full sequence is MATHHTLWMGLALLGVLGDLQAAPEAQVSVQPNFQQDKFLGRWFSAGLASNSSWLREKKAALSMCKSVVAPAADGGLNLTSTFLRKNQCETRTMLLQTAGSLGSYSYRSPHWGSTYSVSVVETDYDQYALLYSQGSKGPGEDFRMATLYSRTQTPRAELKEKFTAFCKAQGFTEDTIVFLPQTDKCLTEQ.

The N-terminal stretch at 1 to 22 (MATHHTLWMGLALLGVLGDLQA) is a signal peptide. An N-linked (GlcNAc...) asparagine glycan is attached at Asn51. The active-site Nucleophile is Cys65. Asn78 carries N-linked (GlcNAc...) asparagine glycosylation. A disulfide bridge connects residues Cys89 and Cys186.

Belongs to the calycin superfamily. Lipocalin family. In terms of assembly, monomer.

The protein localises to the rough endoplasmic reticulum. It localises to the nucleus membrane. It is found in the golgi apparatus. The protein resides in the cytoplasm. Its subcellular location is the perinuclear region. The protein localises to the secreted. The catalysed reaction is prostaglandin H2 = prostaglandin D2. Catalyzes the conversion of PGH2 to PGD2, a prostaglandin involved in smooth muscle contraction/relaxation and a potent inhibitor of platelet aggregation. Involved in a variety of CNS functions, such as sedation, NREM sleep and PGE2-induced allodynia, and may have an anti-apoptotic role in oligodendrocytes. Binds small non-substrate lipophilic molecules, including biliverdin, bilirubin, retinal, retinoic acid and thyroid hormone, and may act as a scavenger for harmful hydrophobic molecules and as a secretory retinoid and thyroid hormone transporter. Possibly involved in development and maintenance of the blood-brain, blood-retina, blood-aqueous humor and blood-testis barrier. It is likely to play important roles in both maturation and maintenance of the central nervous system and male reproductive system. Involved in PLA2G3-dependent maturation of mast cells. PLA2G3 is secreted by immature mast cells and acts on nearby fibroblasts upstream to PTDGS to synthesize PGD2, which in turn promotes mast cell maturation and degranulation via PTGDR. The polypeptide is Prostaglandin-H2 D-isomerase (PTGDS) (Gorilla gorilla gorilla (Western lowland gorilla)).